Reading from the N-terminus, the 382-residue chain is 8-amino-7-oxononanoate synthase (382 aa).

Positions 21 and 131 each coordinate substrate. Serine 178, histidine 206, and threonine 232 together coordinate pyridoxal 5'-phosphate. N6-(pyridoxal phosphate)lysine is present on lysine 235. Substrate is bound at residue threonine 349.

Belongs to the class-II pyridoxal-phosphate-dependent aminotransferase family. BioF subfamily. In terms of assembly, homodimer. Pyridoxal 5'-phosphate serves as cofactor.

It carries out the reaction 6-carboxyhexanoyl-[ACP] + L-alanine + H(+) = (8S)-8-amino-7-oxononanoate + holo-[ACP] + CO2. It participates in cofactor biosynthesis; biotin biosynthesis. Catalyzes the decarboxylative condensation of pimeloyl-[acyl-carrier protein] and L-alanine to produce 8-amino-7-oxononanoate (AON), [acyl-carrier protein], and carbon dioxide. This is 8-amino-7-oxononanoate synthase from Serratia marcescens.